The following is a 473-amino-acid chain: MKPFLNDDFLLTNETSKVLYHQYAKGMPIIDYHCHLSPKEIYENKTFKNLTEVWLYGDHYKWRAMRANGISEEFITGDASDEEKFSAWARTVPMTIGNPLYHWTHLELRRFFGIDDRLDEKSAPHIWERVNEQLAGGGFGARDLIEKSNVETVVTTDDPTDSLEYHVKLKDEDFNVSVLPGFRPDKAMEINQEGFAAWVRKLETASGMKIANYDDFLKALKNRIDFFHEAGGRISDHAINQMMYTETDESEVRPIFAKVMNGESASPEEECKFKSLTLHFLGTCYAEKGWAMQLHINALRNNSSKMYRKLGPDTGYDAINDQDIAKPLCSFLDSLDRKDALPKTILYSLNPRDNVVISSLCGSFQDGRIPGKIQHGTAWWFNDTKDGMLEQMKSLANIGLLSRFIGMLTDSRSFLSYTRHEYFRRLLCDVIGTWVENGEAPDDIELLGRIVKGICYENAKHYFQFEVKDRLKA.

Belongs to the metallo-dependent hydrolases superfamily. Uronate isomerase family.

It catalyses the reaction D-glucuronate = D-fructuronate. It carries out the reaction aldehydo-D-galacturonate = keto-D-tagaturonate. Its pathway is carbohydrate metabolism; pentose and glucuronate interconversion. The protein is Uronate isomerase of Bacillus licheniformis (strain ATCC 14580 / DSM 13 / JCM 2505 / CCUG 7422 / NBRC 12200 / NCIMB 9375 / NCTC 10341 / NRRL NRS-1264 / Gibson 46).